Consider the following 594-residue polypeptide: Aspartate--tRNA(Asp/Asn) ligase (594 aa).

Residue Glu-175 coordinates L-aspartate. The tract at residues 199–202 (QQFK) is aspartate. Positions 221 and 455 each coordinate L-aspartate. An ATP-binding site is contributed by 221–223 (RDE). Glu-488 is an ATP binding site. An L-aspartate-binding site is contributed by Arg-495. An ATP-binding site is contributed by 540–543 (GIDR).

The protein belongs to the class-II aminoacyl-tRNA synthetase family. Type 1 subfamily. Homodimer.

It localises to the cytoplasm. It carries out the reaction tRNA(Asx) + L-aspartate + ATP = L-aspartyl-tRNA(Asx) + AMP + diphosphate. Aspartyl-tRNA synthetase with relaxed tRNA specificity since it is able to aspartylate not only its cognate tRNA(Asp) but also tRNA(Asn). Reaction proceeds in two steps: L-aspartate is first activated by ATP to form Asp-AMP and then transferred to the acceptor end of tRNA(Asp/Asn). This Ruegeria sp. (strain TM1040) (Silicibacter sp.) protein is Aspartate--tRNA(Asp/Asn) ligase.